We begin with the raw amino-acid sequence, 633 residues long: tRNA uridine 5-carboxymethylaminomethyl modification enzyme MnmG (633 aa).

FAD is bound by residues 15-20 (GAGHAG), Ile-127, and Ser-182. An NAD(+)-binding site is contributed by 276 to 290 (GPRYCPSIEDKIVRF). An FAD-binding site is contributed by Gln-373.

Belongs to the MnmG family. Homodimer. Heterotetramer of two MnmE and two MnmG subunits. Requires FAD as cofactor.

The protein resides in the cytoplasm. In terms of biological role, NAD-binding protein involved in the addition of a carboxymethylaminomethyl (cmnm) group at the wobble position (U34) of certain tRNAs, forming tRNA-cmnm(5)s(2)U34. This is tRNA uridine 5-carboxymethylaminomethyl modification enzyme MnmG from Streptococcus agalactiae serotype Ia (strain ATCC 27591 / A909 / CDC SS700).